The primary structure comprises 190 residues: MTPVAAASPDYARRINIVQGEHRVEHDPEAVLCTILGSCVAACLWDPGASVGGMNHFLLPGDAHAQAGGGGAAMRYGAYAMELLINDLLRHGARRDRLKAKLFGGACLMKGLTDIGRLNADFAERFLAAEGIEIVGGSLRGERGRRIQFWPVSGRARQTLLAADQPALLRAEPDLRTLRAPPPSGAVELF.

Belongs to the CheD family.

It carries out the reaction L-glutaminyl-[protein] + H2O = L-glutamyl-[protein] + NH4(+). In terms of biological role, probably deamidates glutamine residues to glutamate on methyl-accepting chemotaxis receptors (MCPs), playing an important role in chemotaxis. This chain is Probable chemoreceptor glutamine deamidase CheD, found in Acidiphilium cryptum (strain JF-5).